A 98-amino-acid polypeptide reads, in one-letter code: NADH-ubiquinone oxidoreductase chain 4L (98 aa).

Transmembrane regions (helical) follow at residues 1–21 (MPSI…GMLI), 29–49 (SLLC…LTAL), and 61–81 (IVLL…LVMV).

This sequence belongs to the complex I subunit 4L family. Core subunit of respiratory chain NADH dehydrogenase (Complex I) which is composed of 45 different subunits.

It localises to the mitochondrion inner membrane. The catalysed reaction is a ubiquinone + NADH + 5 H(+)(in) = a ubiquinol + NAD(+) + 4 H(+)(out). Its function is as follows. Core subunit of the mitochondrial membrane respiratory chain NADH dehydrogenase (Complex I) which catalyzes electron transfer from NADH through the respiratory chain, using ubiquinone as an electron acceptor. Part of the enzyme membrane arm which is embedded in the lipid bilayer and involved in proton translocation. The chain is NADH-ubiquinone oxidoreductase chain 4L (MT-ND4L) from Lepus europaeus (European hare).